Consider the following 611-residue polypeptide: Rho-related BTB domain-containing protein 3 (611 aa).

The rho-like stretch occupies residues 1 to 175; that stretch reads MSIHIVALGN…KELGATYLEL (175 aa). 2 BTB domains span residues 254–356 and 420–487; these read VDVV…QWEE and ADVV…CPAG. The tract at residues 420–611 is interaction with Rab9; the sequence is ADVVFEIQGT…HSRKCRCLVM (192 aa).

In terms of assembly, interacts with RAB9A and RAB9B (at lower level compared to RAB9A-binding). Interacts with M6PRBP1/TIP47. As to expression, ubiquitous. Highly expressed in neural and cardiac tissues, pancreas, placenta and testis.

It localises to the golgi apparatus. In terms of biological role, rab9-regulated ATPase required for endosome to Golgi transport. Involved in transport vesicle docking at the Golgi complex, possibly by participating in release M6PRBP1/TIP47 from vesicles to permit their efficient docking and fusion at the Golgi. Specifically binds Rab9, but not other Rab proteins. Has low intrinsic ATPase activity due to autoinhibition, which is relieved by Rab9. The polypeptide is Rho-related BTB domain-containing protein 3 (RHOBTB3) (Homo sapiens (Human)).